The chain runs to 466 residues: Glutamate--tRNA ligase (466 aa).

Positions 9–19 (PSPTGDLHVGS) match the 'HIGH' region motif. The short motif at 237–241 (KLSKR) is the 'KMSKS' region element. K240 contributes to the ATP binding site.

It belongs to the class-I aminoacyl-tRNA synthetase family. Glutamate--tRNA ligase type 1 subfamily. As to quaternary structure, monomer.

It localises to the cytoplasm. It catalyses the reaction tRNA(Glu) + L-glutamate + ATP = L-glutamyl-tRNA(Glu) + AMP + diphosphate. In terms of biological role, catalyzes the attachment of glutamate to tRNA(Glu) in a two-step reaction: glutamate is first activated by ATP to form Glu-AMP and then transferred to the acceptor end of tRNA(Glu). This chain is Glutamate--tRNA ligase, found in Baumannia cicadellinicola subsp. Homalodisca coagulata.